We begin with the raw amino-acid sequence, 160 residues long: Serine-protein kinase RsbW (160 aa).

The protein belongs to the anti-sigma-factor family.

The enzyme catalyses L-seryl-[protein] + ATP = O-phospho-L-seryl-[protein] + ADP + H(+). It carries out the reaction L-threonyl-[protein] + ATP = O-phospho-L-threonyl-[protein] + ADP + H(+). Functionally, negative regulator of sigma-B activity. Phosphorylates and inactivates its specific antagonist protein, RsbV. Upon phosphorylation of RsbV, RsbW is released and binds to sigma-B, thereby blocking its ability to form an RNA polymerase holoenzyme (E-sigma-B). This Bacillus anthracis (strain A0248) protein is Serine-protein kinase RsbW.